The following is a 100-amino-acid chain: uncharacterized protein (100 aa).

A run of 2 helical transmembrane segments spans residues 50–70 (LLIF…FSLF) and 75–95 (DVFL…SPEV).

Its subcellular location is the membrane. This is an uncharacterized protein from Saccharomyces cerevisiae (strain ATCC 204508 / S288c) (Baker's yeast).